We begin with the raw amino-acid sequence, 183 residues long: MAAISMACVSSQCLSISSKLHNLSFSSTQFPNSSLKPLTFSANLSQPLFSQGCSSLGSFQRRGFSVVCEVATLKKADSAAKRTRQAETRRLRNKARKSEVKTRMRKVFEALDALKKKSGASTEELVPIDNLIAEAYSAIDKAVVKGTLHRNTAARRKSRLARNKKVVEIHHGWYTPSLAPTNV.

Residues 1-68 (MAAISMACVS…FQRRGFSVVC (68 aa)) constitute a chloroplast transit peptide. Residues 79-99 (AAKRTRQAETRRLRNKARKSE) are disordered.

Component of the chloroplast small ribosomal subunit (SSU). Mature 70S chloroplast ribosomes of higher plants consist of a small (30S) and a large (50S) subunit. The 30S small subunit contains 1 molecule of ribosomal RNA (16S rRNA) and 24 different proteins. The 50S large subunit contains 3 rRNA molecules (23S, 5S and 4.5S rRNA) and 33 different proteins.

The protein resides in the plastid. It is found in the chloroplast. Component of the chloroplast ribosome (chloro-ribosome), a dedicated translation machinery responsible for the synthesis of chloroplast genome-encoded proteins, including proteins of the transcription and translation machinery and components of the photosynthetic apparatus. This Spinacia oleracea (Spinach) protein is Small ribosomal subunit protein bS20c (RPS20).